The primary structure comprises 325 residues: Anthranilate phosphoribosyltransferase (325 aa).

5-phospho-alpha-D-ribose 1-diphosphate-binding positions include G73, G76–D77, T81, N83–T86, K100–S108, and S112. G73 contacts anthranilate. S85 provides a ligand contact to Mg(2+). N103 is a binding site for anthranilate. Residue R158 coordinates anthranilate. Mg(2+) contacts are provided by D216 and E217.

This sequence belongs to the anthranilate phosphoribosyltransferase family. Homodimer. The cofactor is Mg(2+).

The enzyme catalyses N-(5-phospho-beta-D-ribosyl)anthranilate + diphosphate = 5-phospho-alpha-D-ribose 1-diphosphate + anthranilate. The protein operates within amino-acid biosynthesis; L-tryptophan biosynthesis; L-tryptophan from chorismate: step 2/5. Its function is as follows. Catalyzes the transfer of the phosphoribosyl group of 5-phosphorylribose-1-pyrophosphate (PRPP) to anthranilate to yield N-(5'-phosphoribosyl)-anthranilate (PRA). The polypeptide is Anthranilate phosphoribosyltransferase (Methanococcus aeolicus (strain ATCC BAA-1280 / DSM 17508 / OCM 812 / Nankai-3)).